The following is a 379-amino-acid chain: MPQISFEVVAECPHTRARAGVLHTAHGDIETPVFMPVGTQATVKGLTQRDLAEDLGVKILLSNTYHLYLRPGHELIRQMGGLHKFMSWPNAILTDSGGFQVFSLSGLRKIHEHGVVFQSHLNGDTHKFTPESTVDVQLAYGSDILMVLDECPEYPVSHEYARESMQRTVRWAREANEHFLERMKQMPTRHALFPIVQGSMFTDLRRECATALVDLDTDGYAIGGLSVGEPRPLSLEVVEATEAILPRTKPRYAMGVGMPAELPEYVARGIDMMDCVLPSRNARNGYLFTSEGRVIIKHARYKDDEGPLDPRCACYTCKSYSRAYLRHLFQSGEILFSVLATRHNIQRYLDIMREIRHAIISGSFPDYLRCVQSSLHDAG.

Catalysis depends on Asp95, which acts as the Proton acceptor. Residues 95-99 (DSGGF), Asp149, Gln197, and Gly224 contribute to the substrate site. Residues 255 to 261 (GVGMPAE) form an RNA binding region. The active-site Nucleophile is the Asp274. 4 residues coordinate Zn(2+): Cys312, Cys314, Cys317, and His343.

This sequence belongs to the queuine tRNA-ribosyltransferase family. As to quaternary structure, homodimer. Within each dimer, one monomer is responsible for RNA recognition and catalysis, while the other monomer binds to the replacement base PreQ1. Requires Zn(2+) as cofactor.

It carries out the reaction 7-aminomethyl-7-carbaguanine + guanosine(34) in tRNA = 7-aminomethyl-7-carbaguanosine(34) in tRNA + guanine. Its pathway is tRNA modification; tRNA-queuosine biosynthesis. Its function is as follows. Catalyzes the base-exchange of a guanine (G) residue with the queuine precursor 7-aminomethyl-7-deazaguanine (PreQ1) at position 34 (anticodon wobble position) in tRNAs with GU(N) anticodons (tRNA-Asp, -Asn, -His and -Tyr). Catalysis occurs through a double-displacement mechanism. The nucleophile active site attacks the C1' of nucleotide 34 to detach the guanine base from the RNA, forming a covalent enzyme-RNA intermediate. The proton acceptor active site deprotonates the incoming PreQ1, allowing a nucleophilic attack on the C1' of the ribose to form the product. After dissociation, two additional enzymatic reactions on the tRNA convert PreQ1 to queuine (Q), resulting in the hypermodified nucleoside queuosine (7-(((4,5-cis-dihydroxy-2-cyclopenten-1-yl)amino)methyl)-7-deazaguanosine). In Solibacter usitatus (strain Ellin6076), this protein is Queuine tRNA-ribosyltransferase.